Here is a 320-residue protein sequence, read N- to C-terminus: MATRSPYKRQTKRSMIQSLPASSSASSRRRFISRKRFAMMIPLALLSGAVFLFFMPFNSWGQSSGSSLDLSHRINEIEVVAEFPHDPDAFTQGLLYAGNDTLFESTGLYGKSSVRKVDLRTGKVEILEKMDNTYFGEGLTLLGERLFQVAWLTNTGFTYDLRNLSKVKPFKHHMKDGWGLATDGKALFGSDGTSTLYRMDPQTMKVTDKHIVRYNGREVRYLNELEYINNEVWANVWQSDCIARISPKDGSLLGWILLSKLSRGLLKSGHRGIDVLNGIAWDSDKQRLFVTGKLWPKLYQIKLKQASAKSGNYIEQQCLV.

The span at 1–12 (MATRSPYKRQTK) shows a compositional bias: basic residues. Residues 1–22 (MATRSPYKRQTKRSMIQSLPAS) form a disordered region. Residues 1–36 (MATRSPYKRQTKRSMIQSLPASSSASSRRRFISRKR) are Cytoplasmic-facing. A helical; Signal-anchor for type II membrane protein membrane pass occupies residues 37-57 (FAMMIPLALLSGAVFLFFMPF). Residues 58 to 320 (NSWGQSSGSS…GNYIEQQCLV (263 aa)) lie on the Lumenal side of the membrane. Residues asparagine 99 and asparagine 163 are each glycosylated (N-linked (GlcNAc...) asparagine).

Belongs to the plant glutaminyl-peptide cyclotransferase family. Post-translationally, glycosylated.

It is found in the endoplasmic reticulum membrane. It carries out the reaction N-terminal L-glutaminyl-[peptide] = N-terminal 5-oxo-L-prolyl-[peptide] + NH4(+). Converts glutamine and N-terminal glutamyl residues in peptides to 5-oxoproline and 5-oxoproline residues. Not involved in the major pathway for 5-oxoproline production. In Arabidopsis thaliana (Mouse-ear cress), this protein is Glutaminyl-peptide cyclotransferase (QCT).